We begin with the raw amino-acid sequence, 146 residues long: Hemoglobin subunit beta (146 aa).

Val1 is subject to N-acetylvaline. A Globin domain is found at 2–146 (HLTGEEKSAV…VANALAHKYH (145 aa)). Thr12 is subject to Phosphothreonine. Ser44 bears the Phosphoserine mark. An N6-acetyllysine modification is found at Lys59. Heme b is bound at residue His63. Position 82 is an N6-acetyllysine (Lys82). His92 is a heme b binding site. Residue Cys93 is modified to S-nitrosocysteine. Position 144 is an N6-acetyllysine (Lys144).

The protein belongs to the globin family. Heterotetramer of two alpha chains and two beta chains. Red blood cells.

Functionally, involved in oxygen transport from the lung to the various peripheral tissues. The chain is Hemoglobin subunit beta (HBB) from Loris tardigradus (Slender loris).